The primary structure comprises 709 residues: Methylmalonyl-CoA mutase (709 aa).

Substrate contacts are provided by residues 73–77 (TIRQY), 183–185 (TIQ), arginine 195, lysine 222, histidine 232, and 271–273 (RLS). One can recognise a B12-binding domain in the interval 579–709 (RPRMLVVKMG…ILDLIREARS (131 aa)). Histidine 592 contacts adenosylcob(III)alamin.

Belongs to the methylmalonyl-CoA mutase family. Homodimer. Adenosylcob(III)alamin is required as a cofactor.

The catalysed reaction is (R)-methylmalonyl-CoA = succinyl-CoA. It functions in the pathway metabolic intermediate metabolism; propanoyl-CoA degradation; succinyl-CoA from propanoyl-CoA: step 3/3. Its function is as follows. Radical enzyme that catalyzes the transformation of (2R)-methylmalonyl-CoA to succinyl-CoA. Is involved in the ethylmalonyl-CoA pathway for acetyl-CoA assimilation required for R.sphaeroides growth on acetate as sole carbon source. The polypeptide is Methylmalonyl-CoA mutase (Cereibacter sphaeroides (strain ATCC 17023 / DSM 158 / JCM 6121 / CCUG 31486 / LMG 2827 / NBRC 12203 / NCIMB 8253 / ATH 2.4.1.) (Rhodobacter sphaeroides)).